A 121-amino-acid chain; its full sequence is Large ribosomal subunit protein uL14c (121 aa).

Belongs to the universal ribosomal protein uL14 family. In terms of assembly, part of the 50S ribosomal subunit.

It is found in the plastid. The protein resides in the apicoplast. Its function is as follows. Binds to 23S rRNA. The polypeptide is Large ribosomal subunit protein uL14c (rpl14) (Eimeria tenella (Coccidian parasite)).